The primary structure comprises 607 residues: Aspartate--tRNA(Asp/Asn) ligase (607 aa).

Glu194 contacts L-aspartate. Residues 218 to 221 (QLFK) are aspartate. Arg240 serves as a coordination point for L-aspartate. ATP is bound by residues 240 to 242 (RDE) and Gln249. His468 lines the L-aspartate pocket. Glu502 contacts ATP. An L-aspartate-binding site is contributed by Arg509. Residue 554-557 (GLDR) participates in ATP binding.

It belongs to the class-II aminoacyl-tRNA synthetase family. Type 1 subfamily. As to quaternary structure, homodimer.

Its subcellular location is the cytoplasm. It carries out the reaction tRNA(Asx) + L-aspartate + ATP = L-aspartyl-tRNA(Asx) + AMP + diphosphate. In terms of biological role, aspartyl-tRNA synthetase with relaxed tRNA specificity since it is able to aspartylate not only its cognate tRNA(Asp) but also tRNA(Asn). Reaction proceeds in two steps: L-aspartate is first activated by ATP to form Asp-AMP and then transferred to the acceptor end of tRNA(Asp/Asn). The sequence is that of Aspartate--tRNA(Asp/Asn) ligase from Desulfotalea psychrophila (strain LSv54 / DSM 12343).